A 502-amino-acid polypeptide reads, in one-letter code: Lysine--tRNA ligase (502 aa).

Positions 403 and 410 each coordinate Mg(2+).

This sequence belongs to the class-II aminoacyl-tRNA synthetase family. As to quaternary structure, homodimer. Requires Mg(2+) as cofactor.

Its subcellular location is the cytoplasm. The enzyme catalyses tRNA(Lys) + L-lysine + ATP = L-lysyl-tRNA(Lys) + AMP + diphosphate. This is Lysine--tRNA ligase from Synechococcus sp. (strain CC9902).